Consider the following 981-residue polypeptide: MSETVSLHKLVKKAVHSKLSFKTFLGLFSQLNTKQVVQDGEYQTEILEIVQNPRNLNDKKITEYKVVLAIQLSLSSSEELKRFWGNLSKISLVGQVDYLIRLNKILKYEYSKYDKDIVRLLIKVQYCDYIVEVLDSFGDKKLSTEQKSLANHIVFFASSVIEHVVVKDEALVNDLVFQLATRLEGLRLSNLLDFLLLKSKNILSEDQIRLTDSSGSGEDKSSDLPTITTSLYKNLSVGSLSSAKQETYNETIKFLWLNKIMKSWKFADNESIFNNFVHNFIPSSDKNKNPYLTSFELIKATFKGFGYAVINNDDCYVLFNWKNFIITRIPVILSTLKFANVNDEETLERAVLNAFNSLPDSIVKVLTNLASGSTKVYDLRQIFIKSLIFNRLLPPVAFQKFFPMESKITQQVILSELAQYNHDLNLRRKFNDKLINVNSEFTSLEESGLLELCNSLPASLEYSYSRQIELSNAINDIIDEMKISREHEKLNRLLLSVMSNVQLTNILVFNSNPYVVLGKMIDYIDSENFRIDDDDENFQDVYSYCGVLILSIISIIEKFKIDLSTFNIKNSFALDYINNFYYRLCDDLTNQIPVNSDEEDNTIATNYNNLLIDWINALFDDSNDGLSDDLIKSISIKQIYKLIPLVYQQAITATSIGKIDFSILTNGIDYLSQVFLIPTTVSIINWLLSEISNKKTDAESLPVKVLSEIVKSNISSESGSQELSSLVFKIVVNICGSNILIALKKIKDWENSQRIRDVVSIVTANLDSNYVEKDLSLPESKSDININEQIKSHLVNFQQQADSPTPIHAFIHRFISDSKDQVLRVLLQEVTSYQKQNNEATKIFINLASYLVVSSSIDSVEDKKYWHGYLSNVSSSATEHKILKNSDKEFNSSMDYHYSSIFNDASSGASNDDDLFNDKSSKQLSSGKLLEQLRTKVNRYNNLLAKFNVIFAENQDPSSPWHKTVNTLADKLLDDINDLYI.

Belongs to the Mediator complex subunit 5 family. Component of the Mediator complex.

It localises to the nucleus. Component of the Mediator complex, a coactivator involved in the regulated transcription of nearly all RNA polymerase II-dependent genes. Mediator functions as a bridge to convey information from gene-specific regulatory proteins to the basal RNA polymerase II transcription machinery. Mediator is recruited to promoters by direct interactions with regulatory proteins and serves as a scaffold for the assembly of a functional preinitiation complex with RNA polymerase II and the general transcription factors. The polypeptide is Mediator of RNA polymerase II transcription subunit 5 (NUT1) (Scheffersomyces stipitis (strain ATCC 58785 / CBS 6054 / NBRC 10063 / NRRL Y-11545) (Yeast)).